Reading from the N-terminus, the 57-residue chain is UPF0391 membrane protein azo1765 (57 aa).

A run of 2 helical transmembrane segments spans residues 1–21 (MIKW…FGFT) and 33–53 (VLFF…VGLG).

This sequence belongs to the UPF0391 family.

The protein resides in the cell membrane. This chain is UPF0391 membrane protein azo1765, found in Azoarcus sp. (strain BH72).